The following is a 356-amino-acid chain: Serpentine receptor class epsilon-29 (356 aa).

A run of 7 helical transmembrane segments spans residues 29–49, 61–81, 119–139, 161–181, 190–210, 251–271, and 281–301; these read IVELFSYLICAYILTLNIYII, ILAIPLFGIWFELIIGKLITI, LLIFGGFLQWHYMFTIIFGVL, LFIPLFLTVISQFLSISTSLA, FLAQLPWIICCPFSAMAYFFV, LVFVVLSCIALCGIGITALFY, and FVENFLFLHPYLSCLTAIFSV.

Belongs to the nematode receptor-like protein sre family.

It is found in the membrane. The polypeptide is Serpentine receptor class epsilon-29 (sre-29) (Caenorhabditis elegans).